The following is a 460-amino-acid chain: MVFFDSVLKKKCEFIPHEAKKANIYLCGPTVYDDAHLGHARSSVCFDFLRRVLLASGYEVVFARNYTDIDDKILKKMQESGKSLKEITNFYIKRYEEDMQALNILEPDFKPKATAYIEQMITYIEKLLELNLAYKLEDGIYFDTSKDDKYFYISKRNLEDNQSRLEESVAKKNDSDFVLWKFDEKFYPASFGKGRPGWHTECVVMIESIFKDKLDIHAGGIDLLFPHHENEACQCRCKNNHELANFWLHNGFVQINGEKMSKSLGNSFFLKDSLKLFNGEVLRFYLLSVHYRAHFNYALEDLQAAKKRLDKFYRLKKRLNLNAFIDEKTIIESKVSQNILDVLNDDLNASKALALLDEFINESNIYLDQNPKDKAYKIQLEKTLKELSFIFGIGFIDTIKYFQFGISEEKCQEIEEKITLRNKAKQEKNYVLADQIRDDLAKENILLMDTPNGVVWEKNG.

Residue Cys27 participates in Zn(2+) binding. The 'HIGH' region motif lies at 29 to 39; that stretch reads PTVYDDAHLGH. Residues Cys202, His227, and Glu231 each coordinate Zn(2+). A 'KMSKS' region motif is present at residues 259 to 263; that stretch reads KMSKS. Residue Lys262 coordinates ATP.

It belongs to the class-I aminoacyl-tRNA synthetase family. As to quaternary structure, monomer. Zn(2+) is required as a cofactor.

It localises to the cytoplasm. It carries out the reaction tRNA(Cys) + L-cysteine + ATP = L-cysteinyl-tRNA(Cys) + AMP + diphosphate. This Campylobacter lari (strain RM2100 / D67 / ATCC BAA-1060) protein is Cysteine--tRNA ligase.